We begin with the raw amino-acid sequence, 471 residues long: Probable ribonuclease FAU-1 (471 aa).

Positions 93–139 constitute an S1 motif domain; sequence GAVFDAAVDHTVGGGAILDLGDDREAYLPFGAVDDHVTDGDTLRVAI.

It belongs to the FAU-1 family.

Probable RNase involved in rRNA stability through maturation and/or degradation of precursor rRNAs. Binds to RNA in loop regions with AU-rich sequences. The chain is Probable ribonuclease FAU-1 from Halobacterium salinarum (strain ATCC 29341 / DSM 671 / R1).